Here is an 821-residue protein sequence, read N- to C-terminus: PX domain-containing protein C1450.12 (821 aa).

One can recognise a PX domain in the interval 171-310 (AYVLGVRQST…SFLTDDPVTL (140 aa)). The segment at 235-271 (KDDHDTYLNSSEDSTLSPLPSRSSDTNDPQSDSQHVL) is disordered. Positions 241-268 (YLNSSEDSTLSPLPSRSSDTNDPQSDSQ) are enriched in polar residues. A phosphothreonine mark is found at threonine 260 and threonine 597. Acidic residues-rich tracts occupy residues 737-746 (GDEDDQDEND) and 754-766 (EHMEDDDSVEEFD). A disordered region spans residues 737–766 (GDEDDQDENDQVTKVEEEHMEDDDSVEEFD). A Phosphoserine modification is found at serine 761.

It is found in the mitochondrion membrane. This is PX domain-containing protein C1450.12 from Schizosaccharomyces pombe (strain 972 / ATCC 24843) (Fission yeast).